Reading from the N-terminus, the 299-residue chain is Hydroxymethylglutaryl-CoA lyase YngG (299 aa).

The Pyruvate carboxyltransferase domain occupies 7-274 (VTIKEVGPRD…KTNVKLEKLL (268 aa)). Substrate is bound at residue Arg-15. Residues Asp-16, His-207, and His-209 each contribute to the a divalent metal cation site. The active site involves Cys-240. Asn-249 is a binding site for a divalent metal cation.

The protein belongs to the HMG-CoA lyase family. Homodimer and homotetramer.

It catalyses the reaction (3S)-3-hydroxy-3-methylglutaryl-CoA = acetoacetate + acetyl-CoA. Its pathway is metabolic intermediate metabolism; (S)-3-hydroxy-3-methylglutaryl-CoA degradation; acetoacetate from (S)-3-hydroxy-3-methylglutaryl-CoA: step 1/1. Involved in the catabolism of branched amino acids such as leucine. This Bacillus subtilis (strain 168) protein is Hydroxymethylglutaryl-CoA lyase YngG (yngG).